The chain runs to 413 residues: Acetate kinase (413 aa).

Asparagine 7 is a Mg(2+) binding site. Lysine 14 contributes to the ATP binding site. Residue arginine 98 participates in substrate binding. Aspartate 157 (proton donor/acceptor) is an active-site residue. ATP is bound by residues 216–220 (HIGNG), 291–293 (DLR), and 339–343 (GVGEN). Glutamate 392 is a binding site for Mg(2+).

The protein belongs to the acetokinase family. As to quaternary structure, homodimer. The cofactor is Mg(2+). Mn(2+) is required as a cofactor.

It localises to the cytoplasm. It carries out the reaction acetate + ATP = acetyl phosphate + ADP. Its pathway is metabolic intermediate biosynthesis; acetyl-CoA biosynthesis; acetyl-CoA from acetate: step 1/2. Its function is as follows. Catalyzes the formation of acetyl phosphate from acetate and ATP. Can also catalyze the reverse reaction. The polypeptide is Acetate kinase (Synechocystis sp. (strain ATCC 27184 / PCC 6803 / Kazusa)).